Here is a 241-residue protein sequence, read N- to C-terminus: Glucosamine-6-phosphate deaminase (241 aa).

The Proton acceptor; for enolization step role is filled by aspartate 67. Asparagine 136 acts as the For ring-opening step in catalysis. Catalysis depends on histidine 138, which acts as the Proton acceptor; for ring-opening step. Residue glutamate 143 is the For ring-opening step of the active site.

The protein belongs to the glucosamine/galactosamine-6-phosphate isomerase family. NagB subfamily.

It catalyses the reaction alpha-D-glucosamine 6-phosphate + H2O = beta-D-fructose 6-phosphate + NH4(+). It participates in amino-sugar metabolism; N-acetylneuraminate degradation; D-fructose 6-phosphate from N-acetylneuraminate: step 5/5. Catalyzes the reversible isomerization-deamination of glucosamine 6-phosphate (GlcN6P) to form fructose 6-phosphate (Fru6P) and ammonium ion. The protein is Glucosamine-6-phosphate deaminase of Alkaliphilus oremlandii (strain OhILAs) (Clostridium oremlandii (strain OhILAs)).